Consider the following 885-residue polypeptide: Rho GTPase-activating protein gacFF (885 aa).

The segment covering 168–182 has biased composition (low complexity); the sequence is TTTNNSNNSNSNNNN. The tract at residues 168–187 is disordered; that stretch reads TTTNNSNNSNSNNNNKQYNS. Residues 222-249 adopt a coiled-coil conformation; that stretch reads LINKIQNDSEQLKLVLSQVEQQIEFLKS. Positions 348 to 394 constitute an F-box domain; that stretch reads SDIFSLLPTHLTLYVFSYLEPKELLILAQVSSQWQKLAGDNLLWVRF. The region spanning 464–571 is the PH domain; that stretch reads SSSKEGWLYK…WMILLNSIIK (108 aa). Composition is skewed to low complexity over residues 594 to 622 and 629 to 648; these read NNVYINNNNNNNNNNNNNNNNNNNNNNNN and LPPLLSKSPSFSNALTSSTG. The interval 594-680 is disordered; sequence NNVYINNNNN…GGGSGGNNNF (87 aa). One can recognise a Rho-GAP domain in the interval 701–885; that stretch reads VALSKILENQ…KYYDEIFIKK (185 aa).

The protein localises to the cytoplasm. Rho GTPase-activating protein involved in the signal transduction pathway. The chain is Rho GTPase-activating protein gacFF (gacFF) from Dictyostelium discoideum (Social amoeba).